Reading from the N-terminus, the 386-residue chain is Phosphoglycerate kinase (386 aa).

Substrate contacts are provided by residues Asp21–Asn23, Arg36, His59–Arg62, Arg113, and Arg146. ATP is bound by residues Lys197, Glu313, and Gly339–Thr342.

It belongs to the phosphoglycerate kinase family. In terms of assembly, monomer.

The protein localises to the cytoplasm. The enzyme catalyses (2R)-3-phosphoglycerate + ATP = (2R)-3-phospho-glyceroyl phosphate + ADP. It functions in the pathway carbohydrate degradation; glycolysis; pyruvate from D-glyceraldehyde 3-phosphate: step 2/5. The chain is Phosphoglycerate kinase from Serratia proteamaculans (strain 568).